Consider the following 165-residue polypeptide: MSEREEVILDTSMGSIHIELYWDHAPRTCKNFYELAKRGYYDGVSFHRIIADFMIQGGDPTGTGRGGTSIYGERFADEINPGLQHTGAGILSMANAGPNTNGSQFFITLAPTPWLDGKHTIFGRVSDGMNVVKRMGLVKTDANDRLFIVQKILYALNAVDLNKEL.

The region spanning 3 to 157 (EREEVILDTS…IVQKILYALN (155 aa)) is the PPIase cyclophilin-type domain.

Belongs to the cyclophilin-type PPIase family. PPIL1 subfamily.

It carries out the reaction [protein]-peptidylproline (omega=180) = [protein]-peptidylproline (omega=0). Functionally, PPIases accelerate the folding of proteins. It catalyzes the cis-trans isomerization of proline imidic peptide bonds in oligopeptides. The sequence is that of Peptidyl-prolyl cis-trans isomerase-like 1 (cyp3) from Rhizopus delemar (strain RA 99-880 / ATCC MYA-4621 / FGSC 9543 / NRRL 43880) (Mucormycosis agent).